The chain runs to 150 residues: UPF0756 membrane protein PMI1560 (150 aa).

A run of 4 helical transmembrane segments spans residues 16–36, 51–71, 82–102, and 123–143; these read GLGI…LLVI, YGMT…IATG, FLNW…WLGA, and VIGV…AGIL.

Belongs to the UPF0756 family.

It localises to the cell membrane. In Proteus mirabilis (strain HI4320), this protein is UPF0756 membrane protein PMI1560.